A 173-amino-acid chain; its full sequence is 2-C-methyl-D-erythritol 2,4-cyclodiphosphate synthase (173 aa).

Asp17 and His19 together coordinate a divalent metal cation. Residues 17–19 (DVH) and 49–50 (HS) each bind 4-CDP-2-C-methyl-D-erythritol 2-phosphate. Residue His57 coordinates a divalent metal cation. Residues 76–80 (FPNTD), 147–150 (TTTE), Phe154, and Arg157 each bind 4-CDP-2-C-methyl-D-erythritol 2-phosphate.

This sequence belongs to the IspF family. As to quaternary structure, homotrimer. A divalent metal cation is required as a cofactor.

It carries out the reaction 4-CDP-2-C-methyl-D-erythritol 2-phosphate = 2-C-methyl-D-erythritol 2,4-cyclic diphosphate + CMP. Its pathway is isoprenoid biosynthesis; isopentenyl diphosphate biosynthesis via DXP pathway; isopentenyl diphosphate from 1-deoxy-D-xylulose 5-phosphate: step 4/6. Involved in the biosynthesis of isopentenyl diphosphate (IPP) and dimethylallyl diphosphate (DMAPP), two major building blocks of isoprenoid compounds. Catalyzes the conversion of 4-diphosphocytidyl-2-C-methyl-D-erythritol 2-phosphate (CDP-ME2P) to 2-C-methyl-D-erythritol 2,4-cyclodiphosphate (ME-CPP) with a corresponding release of cytidine 5-monophosphate (CMP). This is 2-C-methyl-D-erythritol 2,4-cyclodiphosphate synthase from Ehrlichia canis (strain Jake).